The sequence spans 342 residues: Galactose mutarotase (342 aa).

Residue S14 is modified to Phosphoserine. Beta-D-galactose contacts are provided by residues 81-82 (NR) and H107. Phosphoserine is present on S124. The active-site Proton donor is the H176. Beta-D-galactose is bound by residues 176 to 178 (HSY), D243, Q279, and E307. E307 functions as the Proton acceptor in the catalytic mechanism.

The protein belongs to the aldose epimerase family. Monomer.

Its subcellular location is the cytoplasm. The catalysed reaction is alpha-D-galactose = beta-D-galactose. It carries out the reaction alpha-D-glucose = beta-D-glucose. Its pathway is carbohydrate metabolism; hexose metabolism. The protein operates within carbohydrate metabolism; galactose metabolism. Functionally, mutarotase that catalyzes the interconversion of beta-D-galactose and alpha-D-galactose during galactose metabolism. Beta-D-galactose is metabolized in the liver into glucose 1-phosphate, the primary metabolic fuel, by the action of four enzymes that constitute the Leloir pathway: GALM, GALK1 (galactokinase), GALT (galactose-1-phosphate uridylyltransferase) and GALE (UDP-galactose-4'-epimerase). Involved in the maintenance of the equilibrium between the beta- and alpha-anomers of galactose, therefore ensuring a sufficient supply of the alpha-anomer for GALK1. Also active on D-glucose although shows a preference for galactose over glucose. The polypeptide is Galactose mutarotase (Galm) (Rattus norvegicus (Rat)).